The primary structure comprises 103 residues: Small ribosomal subunit protein uS10 (103 aa).

It belongs to the universal ribosomal protein uS10 family. As to quaternary structure, part of the 30S ribosomal subunit.

In terms of biological role, involved in the binding of tRNA to the ribosomes. This is Small ribosomal subunit protein uS10 from Verminephrobacter eiseniae (strain EF01-2).